The primary structure comprises 407 residues: MVSTLKRDEALFELIALEEKRQREGLELIASENFVSKQVREAVGSVLTNKYAEGYPGARYYGGCEVIDRVESLAIERAKALFGAAWANVQPHSGSQANMAVYMALMEPGDTLMGMDLAAGGHLTHGSRVNFSGKLYKVVSYGVRPDTELIDLEEVRRLALEHRPKVIVAGASAYPRFWDFKAFREIADEVGAYLVVDMAHFAGLVAAGLHPNPLPYAHVVTSTTHKTLRGPRGGLILSNDPELGKRIDKLIFPGIQGGPLEHVIAGKAVAFFEALQPEFKEYSRLVVENAKRLAEELARRGYRIVTGGTDNHLFLVDLRPKGLTGKEAEERLDAVGITVNKNAIPFDPKPPRVTSGIRIGTPAITTRGFTPEEMPLVAELIDRALLEGPSEALREEVRRLALAHPMP.

Pyridoxal 5'-phosphate-binding positions include Tyr-51 and 94–95; that span reads GS. Residues Leu-117 and 121-123 each bind (6S)-5,6,7,8-tetrahydrofolate; that span reads GHL. Pyridoxal 5'-phosphate is bound by residues Ser-172, His-200, and His-225. Lys-226 carries the post-translational modification N6-(pyridoxal phosphate)lysine. Glu-242 is a (6S)-5,6,7,8-tetrahydrofolate binding site. Residue Gly-258 participates in pyridoxal 5'-phosphate binding.

The protein belongs to the SHMT family. As to quaternary structure, homodimer. Pyridoxal 5'-phosphate is required as a cofactor.

The protein localises to the cytoplasm. It carries out the reaction (6R)-5,10-methylene-5,6,7,8-tetrahydrofolate + glycine + H2O = (6S)-5,6,7,8-tetrahydrofolate + L-serine. It participates in one-carbon metabolism; tetrahydrofolate interconversion. The protein operates within amino-acid biosynthesis; glycine biosynthesis; glycine from L-serine: step 1/1. In terms of biological role, catalyzes the reversible interconversion of serine and glycine with tetrahydrofolate (THF) serving as the one-carbon carrier. This reaction serves as the major source of one-carbon groups required for the biosynthesis of purines, thymidylate, methionine, and other important biomolecules. Also exhibits THF-independent aldolase activity toward beta-hydroxyamino acids, producing glycine and aldehydes, via a retro-aldol mechanism. This Thermus thermophilus (strain ATCC 27634 / DSM 579 / HB8) protein is Serine hydroxymethyltransferase.